We begin with the raw amino-acid sequence, 649 residues long: UvrABC system protein C (649 aa).

The GIY-YIG domain maps to 12 to 91 (SSPGVYLMKS…IKQHRPKYNI (80 aa)). The region spanning 201-236 (NEVARLYRSKMNLASEQMRYEDAARYRDLLRAIEVT) is the UVR domain. The disordered stretch occupies residues 603-649 (RLHGGPLPNPPPPGEGAMGDGSIPSPRNGVMDDSIPSPSGRGWPKAG).

This sequence belongs to the UvrC family. In terms of assembly, interacts with UvrB in an incision complex.

The protein localises to the cytoplasm. The UvrABC repair system catalyzes the recognition and processing of DNA lesions. UvrC both incises the 5' and 3' sides of the lesion. The N-terminal half is responsible for the 3' incision and the C-terminal half is responsible for the 5' incision. The chain is UvrABC system protein C from Geobacter sp. (strain M21).